Reading from the N-terminus, the 287-residue chain is Flagellin (287 aa).

The protein belongs to the bacterial flagellin family.

The protein resides in the secreted. It is found in the bacterial flagellum. Its function is as follows. Flagellin is the subunit protein which polymerizes to form the filaments of bacterial flagella. This chain is Flagellin (flaA), found in Listeria monocytogenes serovar 1/2a (strain ATCC BAA-679 / EGD-e).